The following is a 208-amino-acid chain: Thymidylate kinase (208 aa).

10 to 17 lines the ATP pocket; the sequence is GIDGSGKS.

Belongs to the thymidylate kinase family.

It carries out the reaction dTMP + ATP = dTDP + ADP. Its function is as follows. Phosphorylation of dTMP to form dTDP in both de novo and salvage pathways of dTTP synthesis. In Jannaschia sp. (strain CCS1), this protein is Thymidylate kinase.